Here is a 132-residue protein sequence, read N- to C-terminus: Ribosome-binding factor A (132 aa).

Belongs to the RbfA family. Monomer. Binds 30S ribosomal subunits, but not 50S ribosomal subunits or 70S ribosomes.

It is found in the cytoplasm. Functionally, one of several proteins that assist in the late maturation steps of the functional core of the 30S ribosomal subunit. Associates with free 30S ribosomal subunits (but not with 30S subunits that are part of 70S ribosomes or polysomes). Required for efficient processing of 16S rRNA. May interact with the 5'-terminal helix region of 16S rRNA. The chain is Ribosome-binding factor A from Bordetella avium (strain 197N).